A 553-amino-acid chain; its full sequence is Dihydroxy-acid dehydratase (553 aa).

Asp-78 is a Mg(2+) binding site. A [2Fe-2S] cluster-binding site is contributed by Cys-119. Mg(2+) contacts are provided by Asp-120 and Lys-121. Lys-121 bears the N6-carboxylysine mark. Position 191 (Cys-191) interacts with [2Fe-2S] cluster. Glu-444 serves as a coordination point for Mg(2+). Ser-470 serves as the catalytic Proton acceptor.

This sequence belongs to the IlvD/Edd family. In terms of assembly, homodimer. [2Fe-2S] cluster is required as a cofactor. The cofactor is Mg(2+).

It carries out the reaction (2R)-2,3-dihydroxy-3-methylbutanoate = 3-methyl-2-oxobutanoate + H2O. It catalyses the reaction (2R,3R)-2,3-dihydroxy-3-methylpentanoate = (S)-3-methyl-2-oxopentanoate + H2O. Its pathway is amino-acid biosynthesis; L-isoleucine biosynthesis; L-isoleucine from 2-oxobutanoate: step 3/4. It participates in amino-acid biosynthesis; L-valine biosynthesis; L-valine from pyruvate: step 3/4. In terms of biological role, functions in the biosynthesis of branched-chain amino acids. Catalyzes the dehydration of (2R,3R)-2,3-dihydroxy-3-methylpentanoate (2,3-dihydroxy-3-methylvalerate) into 2-oxo-3-methylpentanoate (2-oxo-3-methylvalerate) and of (2R)-2,3-dihydroxy-3-methylbutanoate (2,3-dihydroxyisovalerate) into 2-oxo-3-methylbutanoate (2-oxoisovalerate), the penultimate precursor to L-isoleucine and L-valine, respectively. The chain is Dihydroxy-acid dehydratase from Methanosarcina barkeri (strain Fusaro / DSM 804).